The sequence spans 220 residues: uncharacterized protein (220 aa).

7 consecutive transmembrane segments (helical) span residues 6–26 (FSILVDFAAGGLVLASVLIVW), 33–53 (IVRLLAWQGAALAAIPLLRGI), 59–79 (ALIAVGIAVLALRALVLPWLL), 103–123 (LLITAGLTLTAFAITQPVVNL), 126–146 (GVTINAVPAAFAVVLIALFVM), 157–177 (AGFLMLDNGIAATAFLLTAGV), and 179–199 (LIVELGASLDVLFAVIVIGVL).

It localises to the cell membrane. This is an uncharacterized protein from Mycobacterium tuberculosis (strain ATCC 25618 / H37Rv).